The following is a 252-amino-acid chain: Exodeoxyribonuclease (252 aa).

E36 serves as a coordination point for Mg(2+). Y106 is a catalytic residue. Residues D145, N147, and D242 each coordinate Mg(2+). The active-site Proton donor/acceptor is D145.

Belongs to the DNA repair enzymes AP/ExoA family. The cofactor is Mg(2+). Mn(2+) is required as a cofactor.

It localises to the cytoplasm. The enzyme catalyses Exonucleolytic cleavage in the 3'- to 5'-direction to yield nucleoside 5'-phosphates.. This is Exodeoxyribonuclease (exoA) from Bacillus subtilis (strain 168).